The chain runs to 142 residues: MVLSSQNKKAIEELGNLIKANAEAWGADALARLFELHPQTKTYFSKFSGFEACNEQVKKHGKRVMNALADATHHLDNLHLHLEDLARKHGENLLVDPHNFHLFADCIVVTLAVNLQAFTPVTHCAVDKFLELVAYELSSCYR.

In terms of domain architecture, Globin spans 2 to 142; that stretch reads VLSSQNKKAI…VAYELSSCYR (141 aa). Residue His-60 participates in O2 binding. A heme b-binding site is contributed by His-89.

It belongs to the globin family. As to quaternary structure, heterotetramer of two alpha chains and two beta chains. As to expression, red blood cells.

In terms of biological role, involved in oxygen transport from gills to the various peripheral tissues. The chain is Hemoglobin subunit alpha (hba) from Hemitrygon akajei (Red stingray).